Here is a 359-residue protein sequence, read N- to C-terminus: Archaemetzincin-2 (359 aa).

Zn(2+) is bound at residue H254. E255 acts as the Proton acceptor in catalysis. Zn(2+) contacts are provided by H258, H264, C265, C270, C289, and C292.

It belongs to the peptidase M54 family. It depends on Zn(2+) as a cofactor.

Functionally, probable zinc metalloprotease. The sequence is that of Archaemetzincin-2 (Amz2) from Rattus norvegicus (Rat).